We begin with the raw amino-acid sequence, 431 residues long: MSTIETTQGLERRVSITIPADEVETAVREQLKGFAKNARVDGFRKGKVPHHIIAQRFGSSARSEALNDLLPRHFFDLAFKEKLNLAGRPTFAVENAESGKDVVFTATFEVYPEVELKGLENIKVEKPVVEITEADVDNMIEVLRKQQATWAESQAAANAEDRVTIDFSGTIDGEEFEGGKASDFVLFMGQGRMIPGFEEGVIGHKAGEQFDIDVTFPADYHAENLKGKAAKFAITLKKVEVMVLPELTEEFVAKFGPNTKTVADLRNEIQKNMRRELKNALTSRVKQQVIDGLLAENAIDVPFAAVDQEIEVLRGQAAQRFGGNTQQAAQLPRELFEEQAKRRVQVGLLFGEIISSNELKADEERVKAMIEDIASAYEQPAEVIEYYNKNNELMNNLRNVVLEEQAVDAVLAKAQVTEKTASFDEIMNPQA.

In terms of domain architecture, PPIase FKBP-type spans 160 to 245 (EDRVTIDFSG…LKKVEVMVLP (86 aa)).

Belongs to the FKBP-type PPIase family. Tig subfamily.

The protein resides in the cytoplasm. It carries out the reaction [protein]-peptidylproline (omega=180) = [protein]-peptidylproline (omega=0). Involved in protein export. Acts as a chaperone by maintaining the newly synthesized protein in an open conformation. Functions as a peptidyl-prolyl cis-trans isomerase. The chain is Trigger factor from Actinobacillus succinogenes (strain ATCC 55618 / DSM 22257 / CCUG 43843 / 130Z).